The following is a 336-amino-acid chain: DNA-directed RNA polymerase subunit alpha (336 aa).

The alpha N-terminal domain (alpha-NTD) stretch occupies residues 1 to 234 (MIEFVIPKKL…NHFKIVTEGL (234 aa)). The segment at 269–336 (VYNRKIDELE…KFGLELRKGE (68 aa)) is alpha C-terminal domain (alpha-CTD).

This sequence belongs to the RNA polymerase alpha chain family. Homodimer. The RNAP catalytic core consists of 2 alpha, 1 beta, 1 beta' and 1 omega subunit. When a sigma factor is associated with the core the holoenzyme is formed, which can initiate transcription.

The enzyme catalyses RNA(n) + a ribonucleoside 5'-triphosphate = RNA(n+1) + diphosphate. In terms of biological role, DNA-dependent RNA polymerase catalyzes the transcription of DNA into RNA using the four ribonucleoside triphosphates as substrates. This Thermotoga petrophila (strain ATCC BAA-488 / DSM 13995 / JCM 10881 / RKU-1) protein is DNA-directed RNA polymerase subunit alpha.